A 418-amino-acid chain; its full sequence is Gamma-glutamyl phosphate reductase (418 aa).

The protein belongs to the gamma-glutamyl phosphate reductase family.

It localises to the cytoplasm. The catalysed reaction is L-glutamate 5-semialdehyde + phosphate + NADP(+) = L-glutamyl 5-phosphate + NADPH + H(+). It functions in the pathway amino-acid biosynthesis; L-proline biosynthesis; L-glutamate 5-semialdehyde from L-glutamate: step 2/2. Catalyzes the NADPH-dependent reduction of L-glutamate 5-phosphate into L-glutamate 5-semialdehyde and phosphate. The product spontaneously undergoes cyclization to form 1-pyrroline-5-carboxylate. This is Gamma-glutamyl phosphate reductase from Lacticaseibacillus casei (strain BL23) (Lactobacillus casei).